We begin with the raw amino-acid sequence, 85 residues long: High affinity immunoglobulin epsilon receptor subunit gamma (85 aa).

An N-terminal signal peptide occupies residues 1–18; the sequence is MIPAVVLLLLLLVEQAAA. The Extracellular segment spans residues 19 to 23; sequence LGEPQ. Residues 24–44 traverse the membrane as a helical segment; that stretch reads LCYILDAILFLYGIVLTLLYC. Topologically, residues 45–85 are cytoplasmic; sequence RLKLQVRKAATASEKSDGIYTGLSTRTQETYETLKHEKPPQ. The 29-residue stretch at 53-81 folds into the ITAM domain; it reads AATASEKSDGIYTGLSTRTQETYETLKHE. Phosphotyrosine is present on Tyr64. Position 68 is a phosphoserine (Ser68). Tyr75 is modified (phosphotyrosine). Phosphothreonine is present on Thr77.

Belongs to the CD3Z/FCER1G family. As to quaternary structure, igE Fc receptor is a tetramer of an alpha chain, a beta chain, and two disulfide linked gamma chains. Associates with FCGR1A; forms a functional signaling complex. The signaling subunit of immunoglobulin gamma (IgG) Fc receptor complex. As a homodimer or a heterodimer of CD247 and FCER1G, associates with the ligand binding subunit FCGR3A to form a functional receptor complex. Associates with CLEC6A. Interacts with CLEC4E. Interacts (via ITAM domain) with SYK (via SH2 domains); activates SYK, enabling integrin-mediated activation of neutrophils and macrophages. Interacts with CSF2RB and recruits SYK in response to IL3 stimulation; this interaction is direct. Interacts with CD300LH; the interaction may be indirect. Interacts with CD300LD. Interacts with TARM1.

It localises to the cell membrane. Functionally, adapter protein containing an immunoreceptor tyrosine-based activation motif (ITAM) that transduces activation signals from various immunoreceptors. As a component of the high-affinity immunoglobulin E (IgE) receptor, mediates allergic inflammatory signaling in mast cells. As a constitutive component of interleukin-3 receptor complex, selectively mediates interleukin 4/IL4 production by basophils priming T-cells toward effector T-helper 2 subset. Associates with pattern recognition receptors CLEC4D and CLEC4E to form a functional signaling complex in myeloid cells. Binding of mycobacterial trehalose 6,6'-dimycolate (TDM) to this receptor complex leads to phosphorylation of ITAM, triggering activation of SYK, CARD9 and NF-kappa-B, consequently driving maturation of antigen-presenting cells and shaping antigen-specific priming of T-cells toward effector T-helper 1 and T-helper 17 cell subtypes. May function cooperatively with other activating receptors. Functionally linked to integrin beta-2/ITGB2-mediated neutrophil activation. Also involved in integrin alpha-2/ITGA2-mediated platelet activation. In Bos taurus (Bovine), this protein is High affinity immunoglobulin epsilon receptor subunit gamma (FCER1G).